We begin with the raw amino-acid sequence, 212 residues long: Probable nicotinate-nucleotide adenylyltransferase (212 aa).

The protein belongs to the NadD family.

The catalysed reaction is nicotinate beta-D-ribonucleotide + ATP + H(+) = deamido-NAD(+) + diphosphate. The protein operates within cofactor biosynthesis; NAD(+) biosynthesis; deamido-NAD(+) from nicotinate D-ribonucleotide: step 1/1. Functionally, catalyzes the reversible adenylation of nicotinate mononucleotide (NaMN) to nicotinic acid adenine dinucleotide (NaAD). The protein is Probable nicotinate-nucleotide adenylyltransferase of Chromobacterium violaceum (strain ATCC 12472 / DSM 30191 / JCM 1249 / CCUG 213 / NBRC 12614 / NCIMB 9131 / NCTC 9757 / MK).